Reading from the N-terminus, the 288-residue chain is MSGLKEIRGKIDSIRNIQKIAKAMEMISVAKIYQTQRRMLISKPYAETIRKVIDHISSGTLEYKHSYFLERKIQSVGYWVVSTDRGLAGGLNINLLKTLLYDFNKWSNEGITIRLAIIGSKGASFLRSIKQTEIVSCVYGIGDAPKMSALIGSVRVMLQLYDNNQIDRLYLAYNKFINTLTQSPQILQILPIISSKNSILQTKYWDYLYEPDSKVLLNSLLQRYIESQVYQGVVENLASEQSARMMAMKTASDNGEVIINDLKLFYNKARQTKITEELTEIVSGASVI.

It belongs to the ATPase gamma chain family. F-type ATPases have 2 components, CF(1) - the catalytic core - and CF(0) - the membrane proton channel. CF(1) has five subunits: alpha(3), beta(3), gamma(1), delta(1), epsilon(1). CF(0) has three main subunits: a, b and c.

It is found in the cell inner membrane. Produces ATP from ADP in the presence of a proton gradient across the membrane. The gamma chain is believed to be important in regulating ATPase activity and the flow of protons through the CF(0) complex. This Blochmanniella pennsylvanica (strain BPEN) protein is ATP synthase gamma chain.